We begin with the raw amino-acid sequence, 318 residues long: Ribosomal RNA small subunit methyltransferase H (318 aa).

S-adenosyl-L-methionine contacts are provided by residues 38–40 (GGH), D58, Y86, D107, and Q114.

This sequence belongs to the methyltransferase superfamily. RsmH family.

It localises to the cytoplasm. It carries out the reaction cytidine(1402) in 16S rRNA + S-adenosyl-L-methionine = N(4)-methylcytidine(1402) in 16S rRNA + S-adenosyl-L-homocysteine + H(+). In terms of biological role, specifically methylates the N4 position of cytidine in position 1402 (C1402) of 16S rRNA. This is Ribosomal RNA small subunit methyltransferase H from Methylibium petroleiphilum (strain ATCC BAA-1232 / LMG 22953 / PM1).